We begin with the raw amino-acid sequence, 177 residues long: Inorganic pyrophosphatase (177 aa).

Lysine 30, arginine 44, and tyrosine 56 together coordinate substrate. The Mg(2+) site is built by aspartate 66, aspartate 71, and aspartate 103. Residue tyrosine 142 coordinates substrate.

It belongs to the PPase family. Homohexamer. Mg(2+) serves as cofactor.

The protein localises to the cytoplasm. It carries out the reaction diphosphate + H2O = 2 phosphate + H(+). Catalyzes the hydrolysis of inorganic pyrophosphate (PPi) forming two phosphate ions. The protein is Inorganic pyrophosphatase of Mesorhizobium japonicum (strain LMG 29417 / CECT 9101 / MAFF 303099) (Mesorhizobium loti (strain MAFF 303099)).